The chain runs to 134 residues: 15.4 kDa class V heat shock protein (134 aa).

In terms of domain architecture, sHSP spans 19 to 126 (SLNNYQENHV…LIDPSDVPES (108 aa)).

This sequence belongs to the small heat shock protein (HSP20) family. As to quaternary structure, may form oligomeric structures.

The protein resides in the cytoplasm. The polypeptide is 15.4 kDa class V heat shock protein (HSP15.4) (Arabidopsis thaliana (Mouse-ear cress)).